The following is a 299-amino-acid chain: tRNA dimethylallyltransferase (299 aa).

ATP is bound at residue 11-18 (GPTAVGKT). 13–18 (TAVGKT) is a binding site for substrate. The tract at residues 36-39 (DSQQ) is interaction with substrate tRNA.

The protein belongs to the IPP transferase family. In terms of assembly, monomer. Mg(2+) serves as cofactor.

The enzyme catalyses adenosine(37) in tRNA + dimethylallyl diphosphate = N(6)-dimethylallyladenosine(37) in tRNA + diphosphate. Its function is as follows. Catalyzes the transfer of a dimethylallyl group onto the adenine at position 37 in tRNAs that read codons beginning with uridine, leading to the formation of N6-(dimethylallyl)adenosine (i(6)A). In Streptococcus pyogenes serotype M28 (strain MGAS6180), this protein is tRNA dimethylallyltransferase.